The following is a 183-amino-acid chain: Ribosome maturation factor RimM (183 aa).

The PRC barrel domain occupies 95–171 (DPDEFYDHEL…VVVIDPPEGL (77 aa)).

Belongs to the RimM family. As to quaternary structure, binds ribosomal protein uS19.

The protein localises to the cytoplasm. Its function is as follows. An accessory protein needed during the final step in the assembly of 30S ribosomal subunit, possibly for assembly of the head region. Essential for efficient processing of 16S rRNA. May be needed both before and after RbfA during the maturation of 16S rRNA. It has affinity for free ribosomal 30S subunits but not for 70S ribosomes. The chain is Ribosome maturation factor RimM from Rhodococcus opacus (strain B4).